The chain runs to 348 residues: MQLSDFNYELPPELIAQHPLANRTDSRLLEVRADGMNHAHLVDRQFKDILILAQPGDLLVFNDTKVIPARLHGKKETGGNVELLIERISGEKQAWVQIRASKVPKTGSTVHIYNQSGETFSVEMIGYDGRFYEVLFPDHVFSLLERFGKLPLPPYIEHQPDGEDAQRYQTVVAKNPGAVAAPTAGLHFDEVILQKLKDVGVNQATVTLHVGAGTFTPVREEDLSKHQMHYEWFSIPKETLQAIEKTKKNGGRIIAVGTTSLRALESQANSQQSSGETNLFITPGYQFKVVDCLLTNFHLPKSTLLMLVSAFAGVDNIRSAYQHAINQQYRFFSYGDAMFLCRLENIKP.

It belongs to the QueA family. As to quaternary structure, monomer.

Its subcellular location is the cytoplasm. It carries out the reaction 7-aminomethyl-7-carbaguanosine(34) in tRNA + S-adenosyl-L-methionine = epoxyqueuosine(34) in tRNA + adenine + L-methionine + 2 H(+). The protein operates within tRNA modification; tRNA-queuosine biosynthesis. Functionally, transfers and isomerizes the ribose moiety from AdoMet to the 7-aminomethyl group of 7-deazaguanine (preQ1-tRNA) to give epoxyqueuosine (oQ-tRNA). This chain is S-adenosylmethionine:tRNA ribosyltransferase-isomerase, found in Polynucleobacter asymbioticus (strain DSM 18221 / CIP 109841 / QLW-P1DMWA-1) (Polynucleobacter necessarius subsp. asymbioticus).